Reading from the N-terminus, the 333-residue chain is Probable tRNA pseudouridine synthase B (333 aa).

Residues 1–14 show a composition bias toward basic and acidic residues; that stretch reads MKCPSREVFSKFEE. The segment at 1–27 is disordered; that stretch reads MKCPSREVFSKFEESTNPQWGKPPSQR. The active-site Nucleophile is the aspartate 71. One can recognise a PUA domain in the interval 238 to 313; the sequence is LPKIWVRDSA…LVARTDRVVM (76 aa).

The protein belongs to the pseudouridine synthase TruB family. Type 2 subfamily.

It carries out the reaction uridine(55) in tRNA = pseudouridine(55) in tRNA. Its function is as follows. Could be responsible for synthesis of pseudouridine from uracil-55 in the psi GC loop of transfer RNAs. In Pyrobaculum aerophilum (strain ATCC 51768 / DSM 7523 / JCM 9630 / CIP 104966 / NBRC 100827 / IM2), this protein is Probable tRNA pseudouridine synthase B.